We begin with the raw amino-acid sequence, 316 residues long: MTTLTNQKPLGVLFMAYGGPENLGEMPGYLADIRAGRVTSQAILDEITNNYRLIGGKSPLPEFTRAQVEATMEQLASTGRPLKAYIGMRHWSPWIEDAVREMLDDGIEQAIAIVLAPQYSSLSVAKYQKKIKAALEMNHGHIDFAYIDNYHTEPGYITALADRVRIGIQEFPEDERDDVHVILSAHSLPVRIIKEGDPYADQLHETARLVAAQAGLTDEQWSWSYQSAGRSPEPWLGPQLDEHLRDLNEQGIKKVVSIAIGFVSDHVEILFDIDIAAQEVAHELGMTLVRPPALNTDPLFIGTLASVIERKAAEVA.

Residues His186 and Glu268 each contribute to the Fe cation site.

This sequence belongs to the ferrochelatase family.

Its subcellular location is the cytoplasm. The catalysed reaction is heme b + 2 H(+) = protoporphyrin IX + Fe(2+). It participates in porphyrin-containing compound metabolism; protoheme biosynthesis; protoheme from protoporphyrin-IX: step 1/1. Functionally, catalyzes the ferrous insertion into protoporphyrin IX. The chain is Ferrochelatase from Deinococcus radiodurans (strain ATCC 13939 / DSM 20539 / JCM 16871 / CCUG 27074 / LMG 4051 / NBRC 15346 / NCIMB 9279 / VKM B-1422 / R1).